Reading from the N-terminus, the 251-residue chain is Probable transcriptional regulatory protein SYO3AOP1_0685 (251 aa).

This sequence belongs to the TACO1 family.

It localises to the cytoplasm. This is Probable transcriptional regulatory protein SYO3AOP1_0685 from Sulfurihydrogenibium sp. (strain YO3AOP1).